A 337-amino-acid chain; its full sequence is DNA-directed RNA polymerase subunit alpha (337 aa).

Residues 1–233 (MVREKVTVST…DLFIPFLHIE (233 aa)) form an alpha N-terminal domain (alpha-NTD) region. The interval 265-337 (KKIALKSIFI…FVIDLAKNEF (73 aa)) is alpha C-terminal domain (alpha-CTD).

The protein belongs to the RNA polymerase alpha chain family. In terms of assembly, in plastids the minimal PEP RNA polymerase catalytic core is composed of four subunits: alpha, beta, beta', and beta''. When a (nuclear-encoded) sigma factor is associated with the core the holoenzyme is formed, which can initiate transcription.

The protein resides in the plastid. It localises to the chloroplast. It catalyses the reaction RNA(n) + a ribonucleoside 5'-triphosphate = RNA(n+1) + diphosphate. Functionally, DNA-dependent RNA polymerase catalyzes the transcription of DNA into RNA using the four ribonucleoside triphosphates as substrates. The protein is DNA-directed RNA polymerase subunit alpha of Nicotiana tomentosiformis (Tobacco).